Consider the following 203-residue polypeptide: Ribosomal RNA large subunit methyltransferase E (203 aa).

S-adenosyl-L-methionine contacts are provided by Gly51, Trp53, Asp69, Asp85, and Asp109. Catalysis depends on Lys149, which acts as the Proton acceptor.

This sequence belongs to the class I-like SAM-binding methyltransferase superfamily. RNA methyltransferase RlmE family.

The protein localises to the cytoplasm. It catalyses the reaction uridine(2552) in 23S rRNA + S-adenosyl-L-methionine = 2'-O-methyluridine(2552) in 23S rRNA + S-adenosyl-L-homocysteine + H(+). Its function is as follows. Specifically methylates the uridine in position 2552 of 23S rRNA at the 2'-O position of the ribose in the fully assembled 50S ribosomal subunit. In Methanoculleus marisnigri (strain ATCC 35101 / DSM 1498 / JR1), this protein is Ribosomal RNA large subunit methyltransferase E.